The following is a 1135-amino-acid chain: Large proline-rich protein bag6-A (1135 aa).

Residues 7–82 form the Ubiquitin-like domain; that stretch reads MEVTVKTLDS…HLVERAPPQT (76 aa). Disordered regions lie at residues 76 to 114, 194 to 238, 350 to 407, 498 to 522, 552 to 612, 661 to 698, 1075 to 1099, and 1116 to 1135; these read ERAPPQTQPSTGGPSTSSSTSPTSSNAAPVPGAPERNGN, EQAA…SPSE, TGNG…PHPR, SFQFQPGTATTPPGPGGATTTVPGA, QGGS…QHLS, PVSTAPTQSASQAPPPSSPPPPPAHSSPPPAAAPESLP, KATGAKPESSAECVRRELDNSEAQG, and NESYSAQRFPNTQRAFRGDP. Residues 79 to 100 show a composition bias toward low complexity; sequence PPQTQPSTGGPSTSSSTSPTSS. Over residues 212 to 227 the composition is skewed to polar residues; sequence RETLPQTTQNTDGQSN. Positions 228 to 237 are enriched in low complexity; the sequence is TTPTSHPSPS. Over residues 367-387 the composition is skewed to polar residues; sequence QPPSTNTSEPQRPNTENQPPS. Low complexity-rich tracts occupy residues 555–600 and 663–672; these read SSTS…SVPS and STAPTQSASQ. The span at 673-692 shows a compositional bias: pro residues; sequence APPPSSPPPPPAHSSPPPAA. Positions 1087-1099 are enriched in basic and acidic residues; that stretch reads CVRRELDNSEAQG. Polar residues predominate over residues 1116–1129; that stretch reads NESYSAQRFPNTQR.

Component of the bag6/bat3 complex.

Its subcellular location is the cytoplasm. It is found in the cytosol. The protein localises to the nucleus. The protein resides in the secreted. It localises to the extracellular exosome. In terms of biological role, ATP-independent molecular chaperone preventing the aggregation of misfolded and hydrophobic patches-containing proteins. Functions as part of a cytosolic protein quality control complex, the bag6/bat3 complex, which maintains these client proteins in a soluble state and participates in their proper delivery to the endoplasmic reticulum or alternatively can promote their sorting to the proteasome where they undergo degradation. The bag6/bat3 complex is involved in the post-translational delivery of tail-anchored/type II transmembrane proteins to the endoplasmic reticulum membrane. Similarly, the bag6/bat3 complex also functions as a sorting platform for proteins of the secretory pathway that are mislocalized to the cytosol either delivering them to the proteasome for degradation or to the endoplasmic reticulum. The bag6/bat3 complex also plays a role in the endoplasmic reticulum-associated degradation (ERAD), a quality control mechanism that eliminates unwanted proteins of the endoplasmic reticulum through their retrotranslocation to the cytosol and their targeting to the proteasome. It maintains these retrotranslocated proteins in an unfolded yet soluble state condition in the cytosol to ensure their proper delivery to the proteasome. Also required for selective ubiquitin-mediated degradation of defective nascent chain polypeptides by the proteasome. Also involved in endoplasmic reticulum stress-induced pre-emptive quality control, a mechanism that selectively attenuates the translocation of newly synthesized proteins into the endoplasmic reticulum and reroutes them to the cytosol for proteasomal degradation. May ensure the proper degradation of these proteins and thereby protects the endoplasmic reticulum from protein overload upon stress. By stabilizing a large spectrum of proteins, may indirectly affect different biological processes including apoptosis. By controlling the steady-state expression of the IGF1R receptor, indirectly regulates the insulin-like growth factor receptor signaling pathway. When nuclear, may also act as a component of some chromatin regulator complex. The protein is Large proline-rich protein bag6-A of Xenopus laevis (African clawed frog).